The chain runs to 71 residues: Small ribosomal subunit protein bS21 (71 aa).

The interval 39 to 71 (EKPTQERKRKAAAAVKRQLRRSSRDVTKRQRLY) is disordered. Positions 45-59 (RKRKAAAAVKRQLRR) are enriched in basic residues. Residues 60–71 (SSRDVTKRQRLY) are compositionally biased toward basic and acidic residues.

Belongs to the bacterial ribosomal protein bS21 family.

The sequence is that of Small ribosomal subunit protein bS21 from Stenotrophomonas maltophilia (strain K279a).